The following is a 90-amino-acid chain: UPF0237 protein NMA1909 (90 aa).

The ACT domain occupies 5–83 (VITVIGKDRV…LDIRMQNEEI (79 aa)).

This sequence belongs to the UPF0237 family.

In Neisseria meningitidis serogroup A / serotype 4A (strain DSM 15465 / Z2491), this protein is UPF0237 protein NMA1909.